Here is a 441-residue protein sequence, read N- to C-terminus: Putative transporter AmpG 1 (441 aa).

Helical transmembrane passes span Ser5–Gly25, Ile42–Phe62, Leu78–Leu98, Leu104–Ile124, Gly143–Leu163, Glu171–Ala191, Ser249–Tyr269, Val297–Met317, Ser325–Ile345, Leu352–Ile372, Phe390–Val410, and Phe413–Leu433.

This sequence belongs to the major facilitator superfamily.

The protein localises to the cell inner membrane. This Rickettsia felis (strain ATCC VR-1525 / URRWXCal2) (Rickettsia azadi) protein is Putative transporter AmpG 1 (ampG1).